A 184-amino-acid polypeptide reads, in one-letter code: Photosystem I assembly protein Ycf4 (184 aa).

2 consecutive transmembrane segments (helical) span residues 22–42 and 57–77; these read FCWAFILFLGSLGFLLVGISS and IIFFPQGIVMSFYGIAGLFIS.

It belongs to the Ycf4 family.

It is found in the plastid. It localises to the chloroplast thylakoid membrane. Its function is as follows. Seems to be required for the assembly of the photosystem I complex. The polypeptide is Photosystem I assembly protein Ycf4 (Ipomoea purpurea (Common morning glory)).